The sequence spans 195 residues: Apoptosis-associated speck-like protein containing a CARD (195 aa).

The 91-residue stretch at 1 to 91 (MGRARDAILD…AGQLQAATHQ (91 aa)) folds into the Pyrin domain. Residues Lys55 and Lys174 each participate in a glycyl lysine isopeptide (Lys-Gly) (interchain with G-Cter in ubiquitin) cross-link. Positions 107–195 (AAKPGLHFID…SYLVEDLERS (89 aa)) constitute a CARD domain. The residue at position 195 (Ser195) is a Phosphoserine.

Self-associates; enforced oligomerization induces apoptosis, NF-kappa-B regulation and interleukin-1 beta secretion. Homooligomers can form disk-like particles of approximately 12 nm diameter and approximately 1 nm height. Next to isoform 1, also isoform 2 and isoform 3 may be involved in oligomerization leading to functional regulation. Component of several inflammasomes containing one pattern recognition receptor/sensor, such as NLRP1, NLRP2, NLRP3, NLRP6, NLRC4, AIM2, MEFV or NOD2, and probably NLRC4, NLRP12 or IFI16. Major component of the ASC pyroptosome, a 1-2 um supramolecular assembly (one per macrophage cell) which consists of oligomerized PYCARD dimers and CASP1. Interacts with CASP1 (precursor form); the interaction induces activation of CASP1 leading to the processing of interleukin-1 beta; PYCARD competes with RIPK2 for binding to CASP1. Interacts with NLRP3; the interaction requires the homooligomerization of NLRP3. Interacts with NLRP2, NLRC4, MEFV, CARD16, AIM2, IFI16, NOD2, RIGI, RIPK2, PYDC1, PYDC2, NLRP10, CASP8, CHUK, IKBKB and BAX. Component of the AIM2 PANoptosome complex, a multiprotein complex that drives inflammatory cell death (PANoptosis). Post-translationally, phosphorylated. 'Lys-63'-linked polyubiquitination by TRAF3 is critical for speck formation and inflammasome activation. 'Lys-63'-linked deubiquitinated by USP50; a crucial step for NLRP3-mediated inflammasome activation. 'Lys-63'-linked polyubiquitination by PELI1 is also critical for speck formation and inflammasome activation. Deubiquitinated by USP3 that cleaves 'Lys-48'-linked ubiquitin chains and strengthens its stability by blocking proteasomal degradation. In terms of tissue distribution, widely expressed at low levels. Detected in peripheral blood leukocytes, lung, small intestine, spleen, thymus, colon and at lower levels in placenta, liver and kidney. Very low expression in skeletal muscle, heart and brain. Expressed in lung epithelial cells (at protein level). Detected in the leukemia cell lines HL-60 and U-937, but not in Jurkat T-cell lymphoma and Daudi Burkitt's lymphoma. Detected in the melanoma cell line WM35, but not in WM793. Not detected in HeLa cervical carcinoma cells and MOLT-4 lymphocytic leukemia cells.

The protein localises to the cytoplasm. The protein resides in the inflammasome. It localises to the endoplasmic reticulum. Its subcellular location is the mitochondrion. It is found in the nucleus. The protein localises to the golgi apparatus membrane. In terms of biological role, functions as a key mediator in apoptosis and inflammation. Promotes caspase-mediated apoptosis involving predominantly caspase-8 and also caspase-9 in a probable cell type-specific manner. Involved in activation of the mitochondrial apoptotic pathway, promotes caspase-8-dependent proteolytic maturation of BID independently of FADD in certain cell types and also mediates mitochondrial translocation of BAX and activates BAX-dependent apoptosis coupled to activation of caspase-9, -2 and -3. Involved in innate immune response by acting as an integral adapter in the assembly of various inflammasomes (NLRP1, NLRP2, NLRP3, NLRP6, AIM2 and probably IFI16) which recruit and activate caspase-1 leading to processing and secretion of pro-inflammatory cytokines. Caspase-1-dependent inflammation leads to macrophage pyroptosis, a form of cell death. The function as activating adapter in different types of inflammasomes is mediated by the pyrin and CARD domains and their homotypic interactions. Clustered PYCARD nucleates the formation of caspase-1 filaments through the interaction of their respective CARD domains, acting as a platform for of caspase-1 polymerization. In the NLRP1 and NLRC4 inflammasomes seems not be required but facilitates the processing of procaspase-1. In cooperation with NOD2 involved in an inflammasome activated by bacterial muramyl dipeptide leading to caspase-1 activation. May be involved in RIGI-triggered pro-inflammatory responses and inflammasome activation. In collaboration with AIM2 which detects cytosolic double-stranded DNA may also be involved in a caspase-1-independent cell death that involves caspase-8. In adaptive immunity may be involved in maturation of dendritic cells to stimulate T-cell immunity and in cytoskeletal rearrangements coupled to chemotaxis and antigen uptake may be involved in post-transcriptional regulation of the guanine nucleotide exchange factor DOCK2; the latter function is proposed to involve the nuclear form. Also involved in transcriptional activation of cytokines and chemokines independent of the inflammasome; this function may involve AP-1, NF-kappa-B, MAPK and caspase-8 signaling pathways. For regulation of NF-kappa-B activating and inhibiting functions have been reported. Modulates NF-kappa-B induction at the level of the IKK complex by inhibiting kinase activity of CHUK and IKBK. Proposed to compete with RIPK2 for association with CASP1 thereby down-regulating CASP1-mediated RIPK2-dependent NF-kappa-B activation and activating interleukin-1 beta processing. Modulates host resistance to DNA virus infection, probably by inducing the cleavage of and inactivating CGAS in presence of cytoplasmic double-stranded DNA. Functionally, may have a regulating effect on the function as inflammasome adapter. Seems to inhibit inflammasome-mediated maturation of interleukin-1 beta. In Homo sapiens (Human), this protein is Apoptosis-associated speck-like protein containing a CARD.